A 388-amino-acid chain; its full sequence is Peptide chain release factor subunit 1 (388 aa).

This sequence belongs to the eukaryotic release factor 1 family. As to quaternary structure, heterodimer of two subunits, one of which binds GTP.

It localises to the cytoplasm. In terms of biological role, directs the termination of nascent peptide synthesis (translation) in response to the termination codons UAA, UAG and UGA. This is Peptide chain release factor subunit 1 (prf1) from Pyrobaculum aerophilum (strain ATCC 51768 / DSM 7523 / JCM 9630 / CIP 104966 / NBRC 100827 / IM2).